The following is a 174-amino-acid chain: Large ribosomal subunit protein uL6 (174 aa).

This sequence belongs to the universal ribosomal protein uL6 family. In terms of assembly, part of the 50S ribosomal subunit.

This protein binds to the 23S rRNA, and is important in its secondary structure. It is located near the subunit interface in the base of the L7/L12 stalk, and near the tRNA binding site of the peptidyltransferase center. In Stenotrophomonas maltophilia (strain R551-3), this protein is Large ribosomal subunit protein uL6.